The primary structure comprises 443 residues: Xaa-Pro dipeptidase (443 aa).

Asp-246, Asp-257, His-339, Glu-384, and Glu-423 together coordinate Mn(2+).

This sequence belongs to the peptidase M24B family. Bacterial-type prolidase subfamily. Mn(2+) serves as cofactor.

It catalyses the reaction Xaa-L-Pro dipeptide + H2O = an L-alpha-amino acid + L-proline. Its function is as follows. Splits dipeptides with a prolyl residue in the C-terminal position. The sequence is that of Xaa-Pro dipeptidase from Klebsiella pneumoniae subsp. pneumoniae (strain ATCC 700721 / MGH 78578).